A 505-amino-acid chain; its full sequence is MLGSWRAFSEMFCHLRPWRRFCLRKVLPPWLHYSRALSGAEAINALRPFYFAVHPDFFGQHPREREVNENSLKRLSVYLENLQKPGFKSLKPTQLTFYIREKTAQNSSEGQEPVSTTGFRAVRFTLHSSDLLSTVLYILNSCSLPVEHVQSLNTNVHSQPLKEATGMPDRPIKWHRSYYSFTGFKDPDEDLEHVSRVETTLTSWLGSNGKGAVKKLKNSLPLRKELDRLKNELSELLQLSDIRWQRGWGVAHRCSQLHSLSRLAQQNLEPLQNAKGCTIVFTDRSGMSALGHVMLGTMDVHHHWTRLFESLPNYFDLQRRMSALEDQISHLLGGIQVVYIEELQPALTLDEYYSLLDTFYNQLQRSRAPPRPQSLSGLQMILSRYAPSLHELGHFNIPALSDPASLQSFMRTKAQQARENMRRREKLKVIENELIQASTRKFSLEKLYKEPSISSRQMVDCCKRLLEQSLPYLHGMHLCVSHFYSVMQDGDLCIPWNWKKGEAMK.

A coiled-coil region spans residues 216 to 243; the sequence is LKNSLPLRKELDRLKNELSELLQLSDIR.

As to expression, expressed in peripheral blood leukocytes, mainly in T-lymphocytes.

The protein localises to the mitochondrion. May regulate T-cell apoptosis. This Rattus norvegicus (Rat) protein is T-cell activation inhibitor, mitochondrial (Tcaim).